The sequence spans 215 residues: Nucleoredoxin-like protein 1 (215 aa).

The Thioredoxin; atypical domain occupies 1–164; sequence MVDLFLGKVL…GAELIDRNFM (164 aa). The disordered stretch occupies residues 190–215; sequence DEKKKKKKRDDDDDDDDGGGGGGPWG.

The protein belongs to the nucleoredoxin family.

The protein localises to the cell projection. It localises to the cilium. It is found in the photoreceptor outer segment. Its function is as follows. Plays an important role in retinal cone photoreceptor survival. May play a role in cone cell viability, slowing down cone degeneration, does not seem to play a role in degenerating rods. The polypeptide is Nucleoredoxin-like protein 1 (nxnl1) (Danio rerio (Zebrafish)).